The sequence spans 365 residues: 3-dehydroquinate synthase (365 aa).

Residues 106–110 (GVIGD), 130–131 (TT), lysine 142, lysine 151, and 169–172 (FFAT) contribute to the NAD(+) site. 3 residues coordinate Zn(2+): glutamate 184, histidine 247, and histidine 264.

This sequence belongs to the sugar phosphate cyclases superfamily. Dehydroquinate synthase family. The cofactor is NAD(+). Co(2+) serves as cofactor. Zn(2+) is required as a cofactor.

It is found in the cytoplasm. The enzyme catalyses 7-phospho-2-dehydro-3-deoxy-D-arabino-heptonate = 3-dehydroquinate + phosphate. It functions in the pathway metabolic intermediate biosynthesis; chorismate biosynthesis; chorismate from D-erythrose 4-phosphate and phosphoenolpyruvate: step 2/7. Its function is as follows. Catalyzes the conversion of 3-deoxy-D-arabino-heptulosonate 7-phosphate (DAHP) to dehydroquinate (DHQ). In Listeria innocua serovar 6a (strain ATCC BAA-680 / CLIP 11262), this protein is 3-dehydroquinate synthase.